Here is a 473-residue protein sequence, read N- to C-terminus: Cysteine--tRNA ligase (473 aa).

Cysteine 28 is a Zn(2+) binding site. The 'HIGH' region signature appears at 30 to 40; sequence PTVYNYIHIGN. Residues cysteine 210, histidine 235, and glutamate 239 each contribute to the Zn(2+) site. The 'KMSKS' region signature appears at 267-271; that stretch reads KMSKS. Lysine 270 provides a ligand contact to ATP.

This sequence belongs to the class-I aminoacyl-tRNA synthetase family. Monomer. It depends on Zn(2+) as a cofactor.

It is found in the cytoplasm. The catalysed reaction is tRNA(Cys) + L-cysteine + ATP = L-cysteinyl-tRNA(Cys) + AMP + diphosphate. This chain is Cysteine--tRNA ligase, found in Fusobacterium nucleatum subsp. nucleatum (strain ATCC 25586 / DSM 15643 / BCRC 10681 / CIP 101130 / JCM 8532 / KCTC 2640 / LMG 13131 / VPI 4355).